Consider the following 512-residue polypeptide: DNA-binding protein (512 aa).

A disordered region spans residues Met1–Glu105. The segment covering Leu9–Arg21 has biased composition (basic and acidic residues). The span at Gln69–Pro78 shows a compositional bias: pro residues. Positions Pro79–His88 are enriched in basic residues. Acidic residues predominate over residues Gln96–Glu105. A Phosphotyrosine; by host modification is found at Tyr174. Zn(2+) contacts are provided by Cys263 and His265. The interval Ile276–Leu310 is flexible loop. Residues Cys318, Cys334, Cys376, Cys378, Cys430, and Cys447 each contribute to the Zn(2+) site. The interval Val495–Phe512 is C-terminal arm, DBP binding.

The protein belongs to the adenoviridae E2A DNA-binding protein family. In terms of assembly, homomultimerizes on viral ssDNA bound to pTP. Forms a initiation complex with viral polymerase, pTP and hosts NFIA and POU2F1/OCT1. Interacts with host SRCAP.

It is found in the host nucleus. Plays a role in the elongation phase of viral strand displacement replication by unwinding the template in an ATP-independent fashion, employing its capacity to form multimers. Also enhances the rate of initiation. Released from template upon second strand synthesis. Assembles in complex with viral pTP, viral pol, host NFIA and host POU2F1/OCT1 on viral origin of replication. Covers the whole ssDNA genome during synthesis. The complementary strand synthesis induces its relese from DNA template. May inhibit cellular transcription mediated by the interaction between host SRCAP and CBP. The protein is DNA-binding protein of Homo sapiens (Human).